Consider the following 438-residue polypeptide: Na(+)/H(+) antiporter NhaA (438 aa).

A run of 11 helical transmembrane segments spans residues F23–L43, F62–L82, S104–L124, G133–G153, V162–F182, T185–L205, S212–I232, F302–V322, L337–I357, W372–I392, and I410–L430.

It belongs to the NhaA Na(+)/H(+) (TC 2.A.33) antiporter family.

Its subcellular location is the cell inner membrane. It carries out the reaction Na(+)(in) + 2 H(+)(out) = Na(+)(out) + 2 H(+)(in). Na(+)/H(+) antiporter that extrudes sodium in exchange for external protons. The protein is Na(+)/H(+) antiporter NhaA of Helicobacter pylori (strain G27).